A 180-amino-acid polypeptide reads, in one-letter code: NAD(P)H-quinone oxidoreductase subunit I, chloroplastic (180 aa).

2 4Fe-4S ferredoxin-type domains span residues 55 to 84 and 95 to 124; these read GRIH…VDWR and LNYS…MTEE. The [4Fe-4S] cluster site is built by Cys-64, Cys-67, Cys-70, Cys-74, Cys-104, Cys-107, Cys-110, and Cys-114.

Belongs to the complex I 23 kDa subunit family. NDH is composed of at least 16 different subunits, 5 of which are encoded in the nucleus. Requires [4Fe-4S] cluster as cofactor.

The protein resides in the plastid. It is found in the chloroplast thylakoid membrane. The catalysed reaction is a plastoquinone + NADH + (n+1) H(+)(in) = a plastoquinol + NAD(+) + n H(+)(out). It carries out the reaction a plastoquinone + NADPH + (n+1) H(+)(in) = a plastoquinol + NADP(+) + n H(+)(out). In terms of biological role, NDH shuttles electrons from NAD(P)H:plastoquinone, via FMN and iron-sulfur (Fe-S) centers, to quinones in the photosynthetic chain and possibly in a chloroplast respiratory chain. The immediate electron acceptor for the enzyme in this species is believed to be plastoquinone. Couples the redox reaction to proton translocation, and thus conserves the redox energy in a proton gradient. The polypeptide is NAD(P)H-quinone oxidoreductase subunit I, chloroplastic (Dioscorea elephantipes (Elephant's foot yam)).